The chain runs to 422 residues: Adenylosuccinate synthetase (422 aa).

GTP contacts are provided by residues 11-17 (GDEGKGK) and 39-41 (GHT). Asp-12 acts as the Proton acceptor in catalysis. 2 residues coordinate Mg(2+): Asp-12 and Gly-39. Residues 12-15 (DEGK), 37-40 (NAGH), Thr-129, Arg-143, Asn-219, Thr-234, and Arg-298 contribute to the IMP site. The active-site Proton donor is the His-40. 294–300 (VTTGRRR) is a substrate binding site. GTP-binding positions include Arg-300, 326-328 (KLD), and 409-411 (GTG).

The protein belongs to the adenylosuccinate synthetase family. As to quaternary structure, homodimer. Requires Mg(2+) as cofactor.

It is found in the cytoplasm. It catalyses the reaction IMP + L-aspartate + GTP = N(6)-(1,2-dicarboxyethyl)-AMP + GDP + phosphate + 2 H(+). The protein operates within purine metabolism; AMP biosynthesis via de novo pathway; AMP from IMP: step 1/2. Functionally, plays an important role in the de novo pathway and in the salvage pathway of purine nucleotide biosynthesis. Catalyzes the first committed step in the biosynthesis of AMP from IMP. This chain is Adenylosuccinate synthetase, found in Ajellomyces capsulatus (strain NAm1 / WU24) (Darling's disease fungus).